Reading from the N-terminus, the 235-residue chain is MDLRLFKNIVILTGAGISAESGIRTFRDQDGLWEDHRIEDVATPEAFARNPALVQRFYNLRRAQLRDPNLAPNPAHQALVDLENLWEGNFLLVTQNVDNLHRRAGSKNLLHMHGRLDRVFCLHCDEHFEWLLDLAVDQPCPHCGRKGGVRPDIVWFGEMPHHMEEIYEALDKADYFISIGTSGNVYPAAGFVRLAWKAKKIEINLKDTEISPAFDEHFVGPASTEVPRFITQFLE.

Positions 1–235 constitute a Deacetylase sirtuin-type domain; the sequence is MDLRLFKNIV…VPRFITQFLE (235 aa). NAD(+) is bound at residue 14–33; the sequence is GAGISAESGIRTFRDQDGLW. Positions 58 and 61 each coordinate substrate. 95 to 98 provides a ligand contact to NAD(+); sequence QNVD. His113 acts as the Proton acceptor in catalysis. Zn(2+) is bound by residues Cys121, Cys124, Cys140, and Cys143. Residues 180 to 182, 204 to 206, and Ala222 each bind NAD(+); these read GTS and NLK.

Belongs to the sirtuin family. Class III subfamily. Requires Zn(2+) as cofactor.

Its subcellular location is the cytoplasm. It catalyses the reaction N(6)-acetyl-L-lysyl-[protein] + NAD(+) + H2O = 2''-O-acetyl-ADP-D-ribose + nicotinamide + L-lysyl-[protein]. It carries out the reaction N(6)-succinyl-L-lysyl-[protein] + NAD(+) + H2O = 2''-O-succinyl-ADP-D-ribose + nicotinamide + L-lysyl-[protein]. In terms of biological role, NAD-dependent lysine deacetylase and desuccinylase that specifically removes acetyl and succinyl groups on target proteins. Modulates the activities of several proteins which are inactive in their acylated form. In Bdellovibrio bacteriovorus (strain ATCC 15356 / DSM 50701 / NCIMB 9529 / HD100), this protein is NAD-dependent protein deacylase.